Consider the following 404-residue polypeptide: MSRRSSRLQAKQQPQPSQTESPQEAQIIQAKKRKTTQDVKKRREEVTKKHQYEIRNCWPPVLSGGISPCIIIETPHKEIGTSDFSRFTNYRFKNLFINPSPLPDLSWGCSKEVWLNMLKKESRYVHDKHFEVLHSDLEPQMRSILLDWLLEVCEVYTLHRETFYLAQDFFDRFMLTQKDINKNMLQLIGITSLFIASKLEEIYAPKLQEFAYVTDGACSEEDILRMELIILKALKWELCPVTIISWLNLFLQVDALKDAPKVLLPQYSQETFIQIAQLLDLCILAIDSLEFQYRILTAAALCHFTSIEVVKKASGLEWDSISECVDWMVPFVNVVKSTSPVKLKTFKKIPMEDRHNIQTHTNYLAMLEEVNYINTFRKGGQLSPVCNGGIMTPPKSTEKPPGKH.

Positions 1–44 are disordered; that stretch reads MSRRSSRLQAKQQPQPSQTESPQEAQIIQAKKRKTTQDVKKRRE. A compositionally biased stretch (low complexity) spans 12–26; the sequence is QQPQPSQTESPQEAQ. Phosphoserine is present on Ser21. Over residues 35 to 44 the composition is skewed to basic and acidic residues; that stretch reads TTQDVKKRRE. Lys348 carries the N6-lactoyllysine modification. Ser383 is modified (phosphoserine). Thr392 carries the phosphothreonine modification.

The protein belongs to the cyclin family. Cyclin E subfamily. As to quaternary structure, interacts with the CDK2 (in vivo) and CDK3 (in vitro) protein kinases to form a serine/threonine kinase holoenzyme complex. The cyclin subunit imparts substrate specificity to the complex. Post-translationally, phosphorylation by CDK2 triggers its release from CDK2 and degradation via the ubiquitin proteasome pathway. Lactylated at Lys-348. Delactylated by SIRT3. As to expression, according to PubMed:9858585, highest levels of expression in adult testis, thymus and brain. Lower levels in placenta, spleen and colon. Consistently elevated levels in tumor-derived cells compared to non-transformed proliferating cells. According to PubMed:9840927: low levels in thymus, prostate, brain, skeletal muscle, and kidney. Elevated levels in lung. According to PubMed:9840943 highly expressed in testis, placenta, thymus and brain. In a lesser extent in small intestine and colon.

Its subcellular location is the nucleus. Functionally, essential for the control of the cell cycle at the late G1 and early S phase. This chain is G1/S-specific cyclin-E2 (CCNE2), found in Homo sapiens (Human).